Here is a 162-residue protein sequence, read N- to C-terminus: AP-1 complex subunit sigma-1 (162 aa).

This sequence belongs to the adaptor complexes small subunit family. In terms of assembly, adaptor protein complex 1 (AP-1) is a heterotetramer composed of two large adaptins (gamma-type subunit apl4 and beta-type subunit apl2), a medium adaptin (mu-type subunit apm1) and a small adaptin (sigma-type subunit aps1). AP-1 interacts with clathrin.

Its subcellular location is the cytoplasm. The protein localises to the nucleus. The protein resides in the cytoplasmic vesicle. It is found in the clathrin-coated vesicle membrane. It localises to the endosome. Its subcellular location is the golgi apparatus. Its function is as follows. Component of the AP-1 complex which links clathrin to receptors in coated vesicles. Clathrin-associated protein complexes are believed to interact with the cytoplasmic tails of membrane proteins, leading to their selection and concentration. This Schizosaccharomyces pombe (strain 972 / ATCC 24843) (Fission yeast) protein is AP-1 complex subunit sigma-1 (vas2).